A 26-amino-acid chain; its full sequence is Protein YsdD (26 aa).

Positions 1–26 (MTIDKNWLNRSNKDPGRSLRFTHQPV) are disordered.

The sequence is that of Protein YsdD from Escherichia coli (strain K12).